The primary structure comprises 59 residues: INGDCELPKVVGRCRARFPRYYYNLSSRRCEKFIYGGCGGNANNFHTLEECEKVCGVRS.

In terms of domain architecture, BPTI/Kunitz inhibitor spans Cys5–Cys55. Disulfide bonds link Cys5–Cys55, Cys14–Cys38, and Cys30–Cys51.

The protein belongs to the venom Kunitz-type family. Sea anemone type 2 potassium channel toxin subfamily.

It is found in the secreted. The protein localises to the nematocyst. In terms of biological role, dual-function toxin that inhibits both the serine protease trypsin (Kd&lt;30 nM) and voltage-gated potassium channels Kv1.2/KCNA2 (IC(50)=1300 nM). This chain is KappaPI-actitoxin-Avd3d, found in Anemonia sulcata (Mediterranean snakelocks sea anemone).